Reading from the N-terminus, the 3841-residue chain is MSFVPTPSPTVVDQTTLMKKYLQFVAALTDNNTPDETKLKMMQEVSENFENVTSSPQYSTFLEHIIPRFLTFLQDGEVQFLQEKPTQQLRKLVLEIIHRIPTNEHLRSHAKNILSVMFRFLEIESEENVLICLRIIIELHKQFRPPISQEIHHFLDFVKQIYKELPKVVARYFENPQVIAENTVPSPEMVGMITSVMVKTAPERDDSETRTHTIIPRGSLSLKVLAELPIIVVLMYQLYKLNIHNVVSEFVPLIMNTIMLQVSPQARQHKLFNKELYADFIAAQIKTLSFLAYIIRIYQDLVGKYSQQMVKGMLQLLSNCPPETAHLRKELLIAAKHILTTDLRSQFIPCMDKLFDESILIGSGYTARETLRPLAYSTLADLVHHVRQNLPLTDLSLAVQLFAKNIDDESLPSSIQTMSCKLLLNLVDCIRSKSEQENGNGRDILMRMLEVFVLKFHTIARYQLVSIFKKCKPQSEMGVVDTGALPGVPATPTVTTPALPPPAPPTPVTPAPPPATSFDRAGEKEDKQTFQVSDCRSLVKTLVCGVKTITWGITSCKAPGEAQFIPNKQLQPKETQIYIKLVKYAMQALDIYQVQIAGNGQTYIRVANCQTVRMKEEKEVLEHFAGVFTMMNPLTFKEIFQTTVPYMVERISKNYALQIVANSFLANLTTSALFATILVEYLLERLPEMGSNVELSNLYLKLFKLVFGSVSLFAAENEQMLKPHLHKIVNSSMELAQSAKEPYNYFLLLRALFRSIGGGSHDLLYQEFLPLLPNLLQGLNMLQSGLHKQHMKDLFVELCLTVPVRLSSLLPYLPMLMDPLVSALNGSQTLVSQGLRTLELCVDNLQPDFLYDHIQPVRAELMQALWRTLRNPAETISHVAYRVLGKFGGSNRKMLKESQKLLYVVTEVQGPSIKAEFTDCKASIQLPMEKAIETALDCLKSANTEPYYRRQAWEVIKCFLVAMTSLEDNKHSLYQLLAHPNFTEKWIPNVIISHRYKAQDTPARRTFEQALTGAFMSAVIKDLRPSALPFVASLIRHYTMVAVAQQCGPFLLPCYQSGSQPSTGMFHSEENGSKGMDPLVLIDAIAICMAYEEKELCKIGEVALAVIFDVASIILGSKERACQLPLFSYIVERLCACCYEQAWYAKLGGVVSIKFLMERLPLIWVLQNQLTFLKALLFVMMDLTGEVSNGAVAMAKTTLEQLLIRCATPLKDEEKTEELLSAQDKSFHLVTHDLVREVTSPNSTVRKQAMHSLQVLAQVTGKSVTIIMEPHKEVLQDMVPPKKHLLRHQPANAQIGLMEGNTFCTTLQPRLFTMDLNVMEHKVFYTELLNLCEAEDAALMKLPCYKSLPSLVPLRIAALNALAACNYLPQSREKIIAALFKALNSTNSELQEAGEACMGKFLEGATIEVDQIHTHMRPLLMMLGDYRSLTLNVVNRLTSVTRLFPNSFNDKFCDQMMQHLRKWMEVVVITHKGGQRGDGSPAMEGVEEMRICSAIINLFHLIPAAPQTLVKPLLEVVMKTERAMLIEAGSPFREPLIKFLTRHPSQTVELFMMEATLNDPQWSRMFMSFLKHKDAKPLRDVLASNPNRFVPLLVPAGSAATVRPGSPSTSTARLDLQFQAIKIISIIVKNDEGWLAGQHSLVSQLRRVWVSEAFQERHRKDNMAATNWKEPKLLAFCLLSYCKRNYSEIELLFQLLRAFTGRFLCNMTFLKEYMEEEIPKNYGITHKRALFFRFVEFNDPHFNDELKAKVLQHILNPAFLYSFEKGEGEQLLGPPNPEGDNPESITSVFITKVLDPEKQADLADSLRIYLLQFSTLLVEHAPHHIHDNNKSRNSKLRRLMTFAWPCLLPKTCVDPACKYSGHLLLAHIIAKFAIHKKIVLQVFHSLLKAHTMEARAIVRQAMAILTPAVPARMEDGHQMLTHWTRKIIVEEGHTVPQLVHILHLIVQHFRVYYPVRHHLVQHMISAMQRLGFTPSVTIEQRKLAVDLAEVVIKWELQRIKDQQPESEADPGSVGEGTSGASAAMKRGMSVDSAQDVKRFRTAAGAVGTVFGRSQSIPGTEALLTKPVEKQHTDTVVNFLIRIACQVNDSTNVAGSPGELLSRRCVNLMKTALRPDMWPSSELKLQWFDKLLMTVEQPNQANFSNICTGLEILCFLLSVLQPPAILSHFKPLQRGIAACMTCGNTKVLRAVHSLLSRLMSTFPTEPSTSSVASKYEELECLYAAVGKVIYEGLTNYEKASSANPTQLFGTLMILKSACSNNSSYIDRLISVFMRSLQKMVREHLSPQPNPGAAETSTVTSELVMLSLDLVKMRLSVMNMEMRKNFIQVILTSLIEKSPDPKILRAVVKIVEEWVKNSGNPMATNQVPNPREKSILLVKMMTYIEKRFPDDLELNAQFLDLVNYVYRDDNLSGSDITSKLEPAFLSGLRCTQPLIRAKFFEVFDASMKRRVYERLLYICCSQNWESMGSHFWIKQCTELLLAVCERNTTIGTSCQGSMLPSITNVINLADSHDRAAFAMATHIKQEPRERENSETKEEDVEIDIELAPGDQTSLPKTKEQAERDAGNQLHMLTNRHDKFLDSLREVKTGALLNALVQLCHISTPLAEKTWVQLFPRLWKILSDRQQHALSGEMGPFLCSGSHQAQRDCQPSALNCFVEAMSQCVPPIPIRPCVLKYLGKTHNLWLRSTLMLEQQAFEKGLNLHIKPKQSTEFYEQESITPPQQEILDSLAELYSLLQEEDMWAGLWQKRCKFPETSTAIAYEQHGFFEQAQETYEKAMEKARKEHNVSPAIFPEYQLWEDHWIRCSKELNQWEPLTEYGQSKGHNNPYLVLECAWRVSNWAAMKEALVQVELSCPKEMAWKVNMHRGYLAICHPEEQQLNFIERLVEMASSLAIREWRRLPHIVSHVHTPLLQAAQQIIELQEAAQINAGLQPANLGRNTSLHDMKTVVKTWRNRLPIVSDDLSHWSSIFMWRQHHYQAIVTAYENNTQHDPNTNNAMLGVHASASAIIQYGKIARKQGLVNVALDILSRIHTIPTVPIVDCFQKIRQQVKCYLQLAGVMGKNECMQGLEVIESTNLKYFTKEMTAEFYALKGMFLAQINKSEEANKAFSAAVQMHDVLVKAWAMWGDYLENIFVKDRQPHLGVSSITCYLHACRHQNESKSRKYLAKVLWLLSFDDKNTLADAVDKYCIGVPPIQWLAWIPQLLTCLVGSEGKPLLNLISQVGRVYPQAVYFPIRTLYLTLKIEQRERYKSDSGQQQPSSAAAQTHSASDPGPIRATAPMWRCSRIMHMQRELHPTLLSSLEGIVDQMVWFRENWHEEVLRQLQQGLAKCYSVAFEKSGAVSDAKITPHTLNFVKKLVSTFGVGLENVSNVSTMFSSAASESLARRAQATAQDPVFQKMKGQFTTDFDFSVPGSMKLHNLISKLKKWIKILEAKTKQLPKFFLIEEKCRFLSNFSAQTAEVEIPGEFLMPKPTHYYIKIARFMPRVEIVQKHNTAARRLYIRGHNGKIYPYLVMNDACLTESRREERVLQLLRLLNPCLEKRKETTKRHLFFTVPRVVAVSPQMRLVEDNPSSLSLVEIYKQRCAKKGIEHDNPISRYYDRLATVQARGTQASHQVLRDILKEVQGNMVPRSMLKEWALHTFPNATDYWTFRKMFTIQLALIGLAEFMLHLNRLNPEMLQIAQDTGKLNVSYFRFDINDATGDLDANRPVPFRLTPNISEFLTTIGVSGPLTASMIAVARCFAQPNFKVDGILKAVLRDEIIAWHKKTQEDTSMPLSPAGQPENMDSQQLVSLVQKAVTAIMTRLHNLAQFEGGESKVNTLVAAANSLDNLCRMDPAWHPWL.

Disordered regions lie at residues 491 to 516 (TPTV…PPAT) and 2002 to 2027 (QQPE…MKRG). Over residues 498–515 (ALPPPAPPTPVTPAPPPA) the composition is skewed to pro residues. The Bipartite nuclear localization signal motif lies at 2025–2040 (KRGMSVDSAQDVKRFR). The FAT domain maps to 2671-3239 (VLKYLGKTHN…YFPIRTLYLT (569 aa)). Positions 3249–3271 (KSDSGQQQPSSAAAQTHSASDPG) are disordered. Over residues 3251–3268 (DSGQQQPSSAAAQTHSAS) the composition is skewed to low complexity. The PI3K/PI4K catalytic domain maps to 3482 to 3805 (MPRVEIVQKH…AVTAIMTRLH (324 aa)). The tract at residues 3488 to 3494 (VQKHNTA) is G-loop. Residues 3669-3677 (HLNRLNPEM) are catalytic loop. Positions 3689–3714 (VSYFRFDINDATGDLDANRPVPFRLT) are activation loop. The 33-residue stretch at 3809–3841 (QFEGGESKVNTLVAAANSLDNLCRMDPAWHPWL) folds into the FATC domain.

It belongs to the PI3/PI4-kinase family. TRA1 subfamily.

The protein resides in the nucleus. Its function is as follows. Adapter protein, which is found in various multiprotein chromatin complexes with histone acetyltransferase activity (HAT), which gives a specific tag for epigenetic transcription activation. May be required for the mitotic checkpoint and normal cell cycle progression. May play a role in the formation and maintenance of the auditory system. The polypeptide is Transformation/transcription domain-associated protein (Danio rerio (Zebrafish)).